The sequence spans 148 residues: Glyoxalase domain-containing protein 5 (148 aa).

In terms of domain architecture, VOC spans 25–145; sequence RLDHIVMTVK…DRNLLEVSSY (121 aa).

This sequence belongs to the glyoxalase I family.

The chain is Glyoxalase domain-containing protein 5 (Glod5) from Mus musculus (Mouse).